The chain runs to 161 residues: Ribonuclease H (161 aa).

In terms of domain architecture, RNase H type-1 spans 1-142; the sequence is MLKLVKMFSD…CDKIARQSAQ (142 aa). Residues aspartate 10, glutamate 48, aspartate 70, and aspartate 134 each contribute to the Mg(2+) site.

The protein belongs to the RNase H family. In terms of assembly, monomer. It depends on Mg(2+) as a cofactor.

It is found in the cytoplasm. The catalysed reaction is Endonucleolytic cleavage to 5'-phosphomonoester.. Endonuclease that specifically degrades the RNA of RNA-DNA hybrids. The protein is Ribonuclease H (rnhA) of Buchnera aphidicola subsp. Schizaphis graminum (strain Sg).